Here is a 506-residue protein sequence, read N- to C-terminus: NADH-quinone oxidoreductase subunit N 2 (506 aa).

14 consecutive transmembrane segments (helical) span residues 11-31, 44-64, 82-102, 117-137, 140-160, 175-195, 222-242, 254-274, 289-309, 323-345, 356-376, 394-414, 419-439, and 472-492; these read SLAY…LVVW, LVIL…YFLA, FSNL…LFLV, SGEL…MAAS, LLLI…LAGF, VIFG…IFGI, VFVG…AAPF, PTPV…AVLI, GVAT…MTVG, LAYS…SGAG, YCFM…ESGG, AAAM…AGFI, LFSA…VVGV, and LLGG…VYWG.

Belongs to the complex I subunit 2 family. As to quaternary structure, NDH-1 is composed of 14 different subunits. Subunits NuoA, H, J, K, L, M, N constitute the membrane sector of the complex.

The protein resides in the cell inner membrane. The catalysed reaction is a quinone + NADH + 5 H(+)(in) = a quinol + NAD(+) + 4 H(+)(out). In terms of biological role, NDH-1 shuttles electrons from NADH, via FMN and iron-sulfur (Fe-S) centers, to quinones in the respiratory chain. The immediate electron acceptor for the enzyme in this species is believed to be ubiquinone. Couples the redox reaction to proton translocation (for every two electrons transferred, four hydrogen ions are translocated across the cytoplasmic membrane), and thus conserves the redox energy in a proton gradient. The polypeptide is NADH-quinone oxidoreductase subunit N 2 (Sorangium cellulosum (strain So ce56) (Polyangium cellulosum (strain So ce56))).